Reading from the N-terminus, the 1463-residue chain is Regulating synaptic membrane exocytosis protein 1 (1463 aa).

The disordered stretch occupies residues 1–26; it reads MSSAVGPRGPRPPTVPPPMQELPDLS. Positions 9–20 are enriched in pro residues; it reads GPRPPTVPPPMQ. One can recognise a RabBD domain in the interval 22-205; it reads LPDLSHLTEE…TKSGAWFFGS (184 aa). Residues 133-193 form an FYVE-type zinc finger; the sequence is KDDAPTCGIC…VCNLCRKQQE (61 aa). Cys-139, Cys-142, Cys-155, Cys-158, Cys-163, Cys-166, Cys-185, and Cys-188 together coordinate Zn(2+). Residues 205–393 are disordered; the sequence is SGPQQPSQDG…DVELESESVS (189 aa). The segment covering 206–222 has biased composition (polar residues); that stretch reads GPQQPSQDGTLSDTATG. A compositionally biased stretch (basic and acidic residues) spans 227 to 240; it reads VPREKKARLQERSR. Polar residues predominate over residues 241-256; it reads SQTPLSTAAVSSQDTA. A compositionally biased stretch (basic and acidic residues) spans 327–372; that stretch reads ADERERKERRETRRLEKGRSQDYPDRLEKREDGRVAEDEKQRKEEE. The span at 381-391 shows a compositional bias: acidic residues; the sequence is SCEDVELESES. Ser-413 bears the Phosphoserine mark. The 87-residue stretch at 440 to 526 folds into the PDZ domain; it reads RTTMPKESGA…EPQVEIIVSR (87 aa). Residues 533–567 form a disordered region; the sequence is RIPESSHPPLESSSSSFESQKMERPSISVISPTSP. Residues 535–551 show a composition bias toward low complexity; it reads PESSHPPLESSSSSFES. Phosphoserine occurs at positions 563 and 566. The 124-residue stretch at 577-700 folds into the C2 1 domain; that stretch reads LPGQLSVKLW…ALLDDEPHWY (124 aa). Positions 705-856 are disordered; the sequence is HDESSLPLPQ…YSSEPDSELL (152 aa). Position 716 is a phosphoserine (Ser-716). Residues 770–779 are compositionally biased toward polar residues; that stretch reads ATTLTVPEQQ. Position 812 is a phosphoserine (Ser-812). Over residues 827-844 the composition is skewed to basic and acidic residues; that stretch reads RHHDASRSLADHRSRHAE. The residue at position 866 (Ser-866) is a Phosphoserine. The interval 874–1049 is disordered; it reads SELQPSLDRA…RQLPQVPVRS (176 aa). Residues 928–941 show a composition bias toward basic and acidic residues; that stretch reads PENDRHSRKSERSS. The span at 1021-1035 shows a compositional bias: polar residues; that stretch reads QGSPTQSPPADTSFG. The residue at position 1023 (Ser-1023) is a Phosphoserine. A Phosphothreonine modification is found at Thr-1025. Ser-1027, Ser-1079, Ser-1081, Ser-1082, Ser-1110, Ser-1111, and Ser-1113 each carry phosphoserine. The tract at residues 1104–1161 is disordered; that stretch reads DNASAKSSDSDVSDVSAISRASSTSRLSSTSFMSEQSERPRGRISSFTPKMQGRRMGT. Residues 1116-1137 show a composition bias toward low complexity; sequence SDVSAISRASSTSRLSSTSFMS. The residue at position 1187 (Ser-1187) is a Phosphoserine. The segment at 1216–1266 is disordered; that stretch reads RSRSTSQLSQTESGHKKLKSTIQRSTETGMAAEMRKMVRQPSRESTDGSIN. Residues 1248-1261 are compositionally biased toward basic and acidic residues; the sequence is EMRKMVRQPSREST. One can recognise a C2 2 domain in the interval 1309–1427; sequence AMGDIQIGME…DLSSMVIGWY (119 aa). Phosphoserine is present on residues Ser-1448, Ser-1451, Ser-1454, and Ser-1463.

Binds SNAP25, SYT1 and CACNA1B. Interaction with SYT1 is enhanced by calcium ions. Interaction with SNAP25 is weaker in the presence of calcium ions. Interacts with TSPOAP1 and RIMBP2; interacts with PPFIA3 and PPFIA4. Interacts with ERC1. Interacts with RAB3A, RAB3B and RAB3D that have been activated by GTP-binding. Interacts with RAB3C, RAB10, RAB26 and RAB37. Binds UNC13A. Phosphorylated by BRSK1.

The protein resides in the cell membrane. It localises to the synapse. Its subcellular location is the presynaptic cell membrane. In terms of biological role, rab effector involved in exocytosis. May act as scaffold protein that regulates neurotransmitter release at the active zone. Essential for maintaining normal probability of neurotransmitter release and for regulating release during short-term synaptic plasticity. Plays a role in dendrite formation by melanocytes. The protein is Regulating synaptic membrane exocytosis protein 1 (Rims1) of Mus musculus (Mouse).